Here is a 201-residue protein sequence, read N- to C-terminus: Large ribosomal subunit protein eL15B (201 aa).

The segment at 161–182 (SRGLTSIGKKSRGIGKGHRYNN) is disordered. The span at 169 to 179 (KKSRGIGKGHR) shows a compositional bias: basic residues. The residue at position 183 (Ser-183) is a Phosphoserine.

Belongs to the eukaryotic ribosomal protein eL15 family. As to quaternary structure, component of the large ribosomal subunit (LSU). Mature yeast ribosomes consist of a small (40S) and a large (60S) subunit. The 40S small subunit contains 1 molecule of ribosomal RNA (18S rRNA) and at least 33 different proteins. The large 60S subunit contains 3 rRNA molecules (25S, 5.8S and 5S rRNA) and at least 46 different proteins.

The protein resides in the cytoplasm. The protein localises to the nucleus. It localises to the nucleolus. Its function is as follows. Component of the ribosome, a large ribonucleoprotein complex responsible for the synthesis of proteins in the cell. The small ribosomal subunit (SSU) binds messenger RNAs (mRNAs) and translates the encoded message by selecting cognate aminoacyl-transfer RNA (tRNA) molecules. The large subunit (LSU) contains the ribosomal catalytic site termed the peptidyl transferase center (PTC), which catalyzes the formation of peptide bonds, thereby polymerizing the amino acids delivered by tRNAs into a polypeptide chain. The nascent polypeptides leave the ribosome through a tunnel in the LSU and interact with protein factors that function in enzymatic processing, targeting, and the membrane insertion of nascent chains at the exit of the ribosomal tunnel. The sequence is that of Large ribosomal subunit protein eL15B (rpl1502) from Schizosaccharomyces pombe (strain 972 / ATCC 24843) (Fission yeast).